The primary structure comprises 807 residues: MTLTTTTTASSAESQAKMDVKGGALPGEENLPTSEMDLLAKLEAANKLIESDAKSLNSLHSTHSRKNSDTSQISLTSSGNSVAEEDIWTTWATILNDWEGALKRKNPCVSELVRRGIPHHFRAIVWQQLSGASDGDKKQYAEYIKATSACEKVIRRDIARTYPEVEFFKEKDGPGQEALFNVIKAYSLHDREVGYCQGSGFIVGLLLMQMPEEEAFAVLVQIMQQHRMRHMFKPSMSELGLCMYQLENLVQEQIPDMHIHFQQQGFQTTMYASSWFLTLYTTTLNVNLSCRIMDVFLSEGMEFIFKVALALLLTGKDTLLCLDMEAMLKFFQKELPGRVEADVEGFFNLAYSIKLNTKRMKKMEKEYQDLKKKEQEEMAELRRLRRENCLLKQRNELLEAESAELADRLVRGQVSRAEEEETSYAIQTELMQLRRSYLEVSHQLENANEEVRGLSLRLQENNVSIDSNNSRQSSIDELCMKEEALKQRDEMVSCLLEELVKVRQGLAESEDQIRNLKAKVEELEEDKKTLRETTPDNSVAHLQDELIASKLREAEASLSLKDLKQRVQELSSQWQRQLAENQRSESERTTNAVDSTPKKLLTNFFDSSKSSEHTQKLEEELMTTRIREMETLTELKELRLKVMELETQVQVSTNQLRRQDEEHKKLKEELEMAVTREKDMSNKAREQQHRYSDLESRMKDELMNVKIKFTEQSQTVAELKQEISRLETKNSEMLAEGELRANLDDSDKVRDLQDRLADMKAELTALKSRGKFPGAKLRSSSIQSIESTEIDFNDLNMVRRGSTELST.

The tract at residues Met-1 to Leu-31 is disordered. Thr-33 carries the post-translational modification Phosphothreonine. Residues Ser-58 and Ser-64 each carry the phosphoserine modification. The region spanning Gly-116–Gly-300 is the Rab-GAP TBC domain. Coiled coils occupy residues Ser-352–Val-463, Cys-494–Arg-583, and Arg-627–Phe-772.

Interacts with Rab11.

Its subcellular location is the cytoplasm. It is found in the endosome. Its function is as follows. Functions as a GTPase-activating protein (GAP). During border cell migration in the ovary, acts as a GAP for Rab11 and is necessary for the maintenance of active receptor tyrosine kinases at the leading edge. The protein is Ecotropic viral integration site 5 ortholog (Evi5) of Drosophila melanogaster (Fruit fly).